A 368-amino-acid chain; its full sequence is Glycolate oxidase 2 (368 aa).

Positions 1–360 constitute an FMN hydroxy acid dehydrogenase domain; it reads MALVTNVCEY…TRGHVVTESD (360 aa). FMN-binding positions include 78-80, S107, 128-130, and T156; these read PTA and QLS. A glyoxylate-binding site is contributed by R165. The FMN site is built by K231 and S253. Positions 255 and 258 each coordinate glyoxylate. Residue H255 is the Proton acceptor of the active site. FMN contacts are provided by residues 286 to 290 and 309 to 310; these read DSGFR and GR. The Microbody targeting signal motif lies at 366-368; the sequence is SRL.

Belongs to the FMN-dependent alpha-hydroxy acid dehydrogenase family. In terms of assembly, homotetramer. The cofactor is FMN.

It is found in the peroxisome. It carries out the reaction glycolate + O2 = glyoxylate + H2O2. Its pathway is photosynthesis; photorespiration; glycine from 2-phosphoglycolate: step 2/3. Catalyzes the oxidation of glycolate to glyoxylate, with a reduction of O2 to H2O2. Is a key enzyme in photorespiration in green plants. The sequence is that of Glycolate oxidase 2 (GLO2) from Oryza sativa subsp. indica (Rice).